A 148-amino-acid polypeptide reads, in one-letter code: Small ribosomal subunit protein uS13 (148 aa).

The tract at residues 128 to 148 (RGQRTKSTGRRGSTIGVRKKK) is disordered.

Belongs to the universal ribosomal protein uS13 family. In terms of assembly, part of the 30S ribosomal subunit. Forms a loose heterodimer with protein S19. Forms two bridges to the 50S subunit in the 70S ribosome.

Located at the top of the head of the 30S subunit, it contacts several helices of the 16S rRNA. In the 70S ribosome it contacts the 23S rRNA (bridge B1a) and protein L5 of the 50S subunit (bridge B1b), connecting the 2 subunits; these bridges are implicated in subunit movement. The chain is Small ribosomal subunit protein uS13 from Methanococcoides burtonii (strain DSM 6242 / NBRC 107633 / OCM 468 / ACE-M).